The chain runs to 429 residues: MPVESEHFETLQLHAGQEPDAATSSRAVPIYATTSYVFRDCDHGGRLFGLQEPGYIYSRMMNPTADVFEKRIAALEHGAAAIATSSGTSALFMALTTLAKAGDNIVSTSYLYGGTYNLFKVTLPRLGITTKFVNGDDPNDLAAQIDENTKAVYVESIGNPMYNVPDFERIAEVAHAAGVPLMVDNTFGGGGYLVRPIDHGADIVTHSATKWIGGHGTTIGGVIVDSGKFDWKKNSKRFPEFNEPHPGYHGMVFTETFGNLAYAFACRTQTLRDVGGNANPFGVFLLLQGLETLSLRMERHVQNAFALAKYLEKHPKVNWVSYPGLESHVSHKLAKKYLKNGYGAVLSFGAKGGPDQSRKVVNALKLASQLANVGDAKTLVIAPAYTTHLQLTDEEQISAGVTKDLIRVAVGIEHIDDIIADFAQALEVA.

An N6-(pyridoxal phosphate)lysine modification is found at K210.

The protein belongs to the trans-sulfuration enzymes family. In terms of assembly, homotetramer. Requires pyridoxal 5'-phosphate as cofactor.

The protein localises to the cytoplasm. The protein resides in the nucleus. The catalysed reaction is O-acetyl-L-homoserine + methanethiol = L-methionine + acetate + H(+). The enzyme catalyses O-acetyl-L-homoserine + hydrogen sulfide = L-homocysteine + acetate. It participates in amino-acid biosynthesis; L-methionine biosynthesis via de novo pathway; L-homocysteine from O-acetyl-L-homoserine. Its function is as follows. Catalyzes the conversion of O-acetyl-L-homoserine (OAH) into homocysteine in the methionine biosynthesis pathway. Can also use O-succinyl-L-homoserine and L-homoserine as substrates. Also has cysteine synthase (O-acetylserine sulfhydrylase) activity in vitro, but in S.pombe, it seems only to be involved in the alternative pathway of methionine biosynthesis under cysteine deficiency conditions. The chain is Homocysteine synthase from Schizosaccharomyces pombe (strain 972 / ATCC 24843) (Fission yeast).